The chain runs to 338 residues: Glyceraldehyde-3-phosphate dehydrogenase (338 aa).

Residues 13–14 (RI), Asp35, and Arg80 contribute to the NAD(+) site. Residues 151–153 (SCT), Thr182, 211–212 (TG), and Arg234 each bind D-glyceraldehyde 3-phosphate. The Nucleophile role is filled by Cys152. Residue Asn316 participates in NAD(+) binding.

This sequence belongs to the glyceraldehyde-3-phosphate dehydrogenase family. In terms of assembly, homotetramer.

The protein resides in the cytoplasm. The catalysed reaction is D-glyceraldehyde 3-phosphate + phosphate + NAD(+) = (2R)-3-phospho-glyceroyl phosphate + NADH + H(+). The protein operates within carbohydrate degradation; glycolysis; pyruvate from D-glyceraldehyde 3-phosphate: step 1/5. This chain is Glyceraldehyde-3-phosphate dehydrogenase (GPD), found in Sclerotinia sclerotiorum (White mold).